Reading from the N-terminus, the 465-residue chain is tRNA modification GTPase MnmE (465 aa).

(6S)-5-formyl-5,6,7,8-tetrahydrofolate is bound by residues Arg-21, Glu-85, and Lys-124. The 168-residue stretch at 220–387 (GVPVAIIGET…LQQRLVAAAH (168 aa)) folds into the TrmE-type G domain. Position 230 (Asn-230) interacts with K(+). GTP-binding positions include 230-235 (NAGKST), 249-255 (SDIHGTT), and 274-277 (DTAG). Ser-234 provides a ligand contact to Mg(2+). K(+) contacts are provided by Ser-249, Ile-251, and Thr-254. Thr-255 is a Mg(2+) binding site. Lys-465 contributes to the (6S)-5-formyl-5,6,7,8-tetrahydrofolate binding site.

Belongs to the TRAFAC class TrmE-Era-EngA-EngB-Septin-like GTPase superfamily. TrmE GTPase family. Homodimer. Heterotetramer of two MnmE and two MnmG subunits. The cofactor is K(+).

The protein resides in the cytoplasm. Its function is as follows. Exhibits a very high intrinsic GTPase hydrolysis rate. Involved in the addition of a carboxymethylaminomethyl (cmnm) group at the wobble position (U34) of certain tRNAs, forming tRNA-cmnm(5)s(2)U34. This chain is tRNA modification GTPase MnmE, found in Bacteroides fragilis (strain ATCC 25285 / DSM 2151 / CCUG 4856 / JCM 11019 / LMG 10263 / NCTC 9343 / Onslow / VPI 2553 / EN-2).